Here is a 195-residue protein sequence, read N- to C-terminus: HTH-type transcriptional regulator BetI (195 aa).

One can recognise an HTH tetR-type domain in the interval 8-68 (SIRRRQLIDA…ATMRDITSQL (61 aa)). The H-T-H motif DNA-binding region spans 31–50 (TIAQIARRAGVSTGIISHYF).

The protein operates within amine and polyamine biosynthesis; betaine biosynthesis via choline pathway [regulation]. Repressor involved in the biosynthesis of the osmoprotectant glycine betaine. It represses transcription of the choline transporter BetT and the genes of BetAB involved in the synthesis of glycine betaine. This chain is HTH-type transcriptional regulator BetI, found in Escherichia coli (strain K12 / DH10B).